Reading from the N-terminus, the 566-residue chain is Mucolipin-2 (566 aa).

Residues 1-65 (MPGDEETLDL…YRARRQIPWK (65 aa)) lie on the Cytoplasmic side of the membrane. A helical transmembrane segment spans residues 66 to 86 (LGLQILKIVMVTTQLVRFGLS). At 87–288 (NQLVVAFKED…ISGSTQRSTH (202 aa)) the chain is on the extracellular side. Positions 107–123 (KGFSGVDEDDYSCSIYT) are extracellular/lumenal pore loop. Intrachain disulfides connect cysteine 164–cysteine 190 and cysteine 243–cysteine 274. A helical membrane pass occupies residues 289–309 (YLLVFDVFVIMICLASLILCT). The Cytoplasmic portion of the chain corresponds to 310 to 346 (RSIVLALRLRKRFLNFFLEKYKQRVCGADQWEFVNGW). Residues 347 to 367 (YVLVTISDLMTIIGSILKMEI) form a helical membrane-spanning segment. At 368–376 (KAKKLTNYD) the chain is on the extracellular side. Residues 377–397 (VCSILLGTSTLFVWVGVIRYL) traverse the membrane as a helical segment. Over 398–419 (GYFQTYNVLILTMQASLPKVLR) the chain is Cytoplasmic. A helical membrane pass occupies residues 420 to 440 (FCACAGMIYLGYTFCGWIVLG). The Extracellular portion of the chain corresponds to 441 to 448 (PYHEKFEN). The pore-forming intramembrane region spans 449-469 (LNIVAECLFSLVNGDDMFATF). Positions 461-464 (NGDD) match the Selectivity filter motif. Topologically, residues 470-480 (AQIQQKSILVW) are extracellular. Residues 481–502 (LFSRLYLYSFISLFIYMVLSLF) traverse the membrane as a helical segment. At 503 to 566 (IALITDSYHT…RSNDHLILID (64 aa)) the chain is on the cytoplasmic side.

It belongs to the transient receptor (TC 1.A.4) family. Polycystin subfamily. MCOLN2 sub-subfamily. Forms homooligomeric complexes; probably tetrameric. Can heterooligomerize with MCOLN1; heteromeric assemblies have different channel properties as compared to the respective homooligomers and may be tissue-specific. Interacts with TMEM176A. Expressed in activated macrophages and microglia (at protein level). As to expression, isoform 1 is widely expressed at very low levels. In terms of tissue distribution, isoform 2 is expressed at high levels in lymphoid tissues (thymus and spleen) and kidney, and at moderate levels in heart, lung, liver and stomach.

The protein resides in the cell membrane. It localises to the lysosome membrane. It is found in the recycling endosome membrane. It catalyses the reaction Ca(2+)(in) = Ca(2+)(out). The catalysed reaction is Fe(2+)(in) = Fe(2+)(out). Fe(2+) channel activity is potentiated by low pH. Nonselective cation channel probably playing a role in the regulation of membrane trafficking events. Acts as a Ca(2+)-permeable cation channel with inwardly rectifying activity. May activate ARF6 and be involved in the trafficking of GPI-anchored cargo proteins to the cell surface via the ARF6-regulated recycling pathway. May play a role in immune processes. In adaptive immunity, TRPML2 and TRPML1 may play redundant roles in the function of the specialized lysosomes of B cells. In the innate immune response, may play a role in the regulation of chemokine secretion and macrophage migration. Through a possible and probably tissue-specific heteromerization with MCOLN1 may be at least in part involved in many lysosome-dependent cellular events. Also functions as a Fe(2+) permeable channel. The sequence is that of Mucolipin-2 (Mcoln2) from Mus musculus (Mouse).